The chain runs to 511 residues: Histidine ammonia-lyase (511 aa).

Residues 142 to 144 constitute a cross-link (5-imidazolinone (Ala-Gly)); that stretch reads ASG. S143 carries the post-translational modification 2,3-didehydroalanine (Ser).

It belongs to the PAL/histidase family. Post-translationally, contains an active site 4-methylidene-imidazol-5-one (MIO), which is formed autocatalytically by cyclization and dehydration of residues Ala-Ser-Gly.

It localises to the cytoplasm. The catalysed reaction is L-histidine = trans-urocanate + NH4(+). The protein operates within amino-acid degradation; L-histidine degradation into L-glutamate; N-formimidoyl-L-glutamate from L-histidine: step 1/3. The protein is Histidine ammonia-lyase of Rhizobium rhizogenes (strain K84 / ATCC BAA-868) (Agrobacterium radiobacter).